A 133-amino-acid chain; its full sequence is MSDYIIKVGKRKTAIARAIIRKGSGKFLINGYPIELYPIEILREKMLEPIRILGDRSKEIDIDVNVHGGGNTGQADATRTAMAKAIIEYFKDSDLEAEIRAYDRSMLVNDVRRKMPKKPMGYGARAKRQKSYR.

Belongs to the universal ribosomal protein uS9 family.

This is Small ribosomal subunit protein uS9 from Picrophilus torridus (strain ATCC 700027 / DSM 9790 / JCM 10055 / NBRC 100828 / KAW 2/3).